Here is a 118-residue protein sequence, read N- to C-terminus: REPTOR-binding partner (118 aa).

Over residues 1-20 (MADMEIQSNKMSITEETQVQ) the composition is skewed to polar residues. Positions 1 to 53 (MADMEIQSNKMSITEETQVQTRKECGKRGRKPGRKTSTEKLDMKAKLERSRQS) are disordered. Over residues 36 to 53 (TSTEKLDMKAKLERSRQS) the composition is skewed to basic and acidic residues. The segment at 40–77 (KLDMKAKLERSRQSARECRARKKLRYQYLEELVADREK) is basic motif. One can recognise a bZIP domain in the interval 40-90 (KLDMKAKLERSRQSARECRARKKLRYQYLEELVADREKAVVALRTELERLI). Positions 82 to 89 (LRTELERL) are leucine-zipper.

It belongs to the bZIP family. ATF subfamily. In terms of assembly, homodimer. Interacts (via C-terminus) with REPTOR (via C-terminus).

Its subcellular location is the nucleus. The protein localises to the chromosome. In terms of biological role, transcriptional regulator that acts in the TORC1 signaling pathway to regulate energy homeostasis and promote survival during nutrient deprivation. Interacts with REPTOR to form a transcriptional activator complex that functions downstream of TORC1 to up-regulate the expression of most target genes induced by TORC1 inhibition. In the complex, acts to enhance the binding of the transcriptional activator REPTOR to the regulatory sequences of target genes. Under normal conditions TORC1 is active, inhibiting the formation of the REPTOR/REPTOR-BP complex by phosphorylating REPTOR and mediates its cytoplasmic retention by forming a docking site for 14-3-3 proteins. Upon TORC1 inhibition resulting from nutrient stress, REPTOR is recruited into the nucleus where it interacts with REPTOR-BP and together they maintain organismal metabolism by activating the expression of target stress response genes including those involved in glycogenesis and triglyceride biosynthesis. The complex also appears to negatively regulate some aspects of TORC1-dependent larval growth. The protein is REPTOR-binding partner of Drosophila melanogaster (Fruit fly).